A 91-amino-acid polypeptide reads, in one-letter code: C-C motif chemokine 5 (91 aa).

The N-terminal stretch at 1-23 (MKISAAALTIILTAAALCTPAPA) is a signal peptide. 2 disulfide bridges follow: Cys33/Cys57 and Cys34/Cys73.

Belongs to the intercrine beta (chemokine CC) family. In terms of tissue distribution, T-cell and macrophage specific.

It is found in the secreted. Its function is as follows. Chemoattractant for blood monocytes, memory T-helper cells and eosinophils. Causes the release of histamine from basophils and activates eosinophils. May activate several chemokine receptors including CCR1, CCR3, CCR4 and CCR5. May also be an agonist of the G protein-coupled receptor GPR75. Together with GPR75, may play a role in neuron survival through activation of a downstream signaling pathway involving the PI3, Akt and MAP kinases. By activating GPR75 may also play a role in insulin secretion by islet cells. This Mus musculus (Mouse) protein is C-C motif chemokine 5 (Ccl5).